A 503-amino-acid polypeptide reads, in one-letter code: WD repeat-containing protein 55 homolog (503 aa).

Disordered stretches follow at residues 1–21 (MHTHNNFKTPSDADELDDLDD) and 35–132 (ALVG…DDLD). Composition is skewed to acidic residues over residues 12 to 21 (DADELDDLDD), 40 to 50 (DVSDSDIDEHD), and 78 to 96 (NAEDSSDSDDSMLEEDEAE). 6 WD repeats span residues 157–196 (KLEDFITDVCFHPDRDIIALATIIGDVHLYEYGNEGNKLL), 201–242 (VHSK…KLYE), 244–282 (AHDDAINKLHVLDENLFATGDDAGTVKLWDLRTKNPIFE), 285–324 (EVEDQITQMITNDQKKLLLATSADGYLTTFNIAARKLYVQ), 327–366 (PYEEELNCMGIYRGSSKLVVGTSKGKLYSYNWGYFGYHCD), and 411–450 (QHNMPIESLDINTSGELLASSSHNNDVRFWNVKYFEDFGD). Positions 483–503 (TKEDEDNADNNDAAAGPSNSA) are disordered.

Belongs to the WD repeat WDR55 family.

The polypeptide is WD repeat-containing protein 55 homolog (Drosophila persimilis (Fruit fly)).